We begin with the raw amino-acid sequence, 491 residues long: AAA-ATPase At2g46620 (491 aa).

The chain crosses the membrane as a helical span at residues 1–21 (MGILWDSFLLLLVSTFALFLV). 238–245 (GPSGTGKS) is a binding site for ATP. Residues 423–460 (GTGRRLLLENGSRKSTSEDVSDDMSGSLCGGGGGSSPA) form a disordered region.

Belongs to the AAA ATPase family. BCS1 subfamily. Mg(2+) serves as cofactor.

It is found in the membrane. The catalysed reaction is ATP + H2O = ADP + phosphate + H(+). This Arabidopsis thaliana (Mouse-ear cress) protein is AAA-ATPase At2g46620.